Consider the following 395-residue polypeptide: L-lactate dehydrogenase (395 aa).

The FMN hydroxy acid dehydrogenase domain occupies 1–380 (MIISAASDYR…SKDSLVQELS (380 aa)). Residue Y24 coordinates substrate. FMN is bound by residues S106 and Q127. A substrate-binding site is contributed by Y129. An FMN-binding site is contributed by T155. A substrate-binding site is contributed by R164. K251 contacts FMN. H275 (proton acceptor) is an active-site residue. R278 is a binding site for substrate. Residue 306-330 (DSGIRNGLDVVRMIALGADSVLLGR) participates in FMN binding.

The protein belongs to the FMN-dependent alpha-hydroxy acid dehydrogenase family. FMN serves as cofactor.

The protein localises to the cell inner membrane. It catalyses the reaction (S)-lactate + A = pyruvate + AH2. Functionally, catalyzes the conversion of L-lactate to pyruvate. Is coupled to the respiratory chain. The sequence is that of L-lactate dehydrogenase from Enterobacter sp. (strain 638).